The primary structure comprises 847 residues: Guanine nucleotide exchange factor VAV3 (847 aa).

The Calponin-homology (CH) domain occupies 1–119 (MEPWKQCAQW…ETLSRLSRTP (119 aa)). Y141 is subject to Phosphotyrosine. One can recognise a DH domain in the interval 192-371 (IRSCCLAEIK…KDLAQYVNEV (180 aa)). A PH domain is found at 400-502 (RPQGDGEIRI…WLEQFEMALS (103 aa)). Residues 513–562 (FHDFKMHTFTRVTSCKVCQMLLRGTFYQGYLCFKCGARAHKECLGRVDNC) form a Phorbol-ester/DAG-type zinc finger. The sufficient for interaction with ROS1 stretch occupies residues 560 to 847 (DNCGRVNSGE…FPSTYVEEDE (288 aa)). Positions 592–660 (PGLPKMQVIR…PSDAVKPCPC (69 aa)) constitute an SH3 1 domain. The SH2 domain occupies 672–766 (WYAGAMERLQ…TLDTTLQFPY (95 aa)). Residues 788–847 (KVLGIAIARYDFCARDMRELSLLKGDVVKIYTKMSANGWWRGEVNGRVGWFPSTYVEEDE) enclose the SH3 2 domain.

Interacts with the PH domain of SH2B2. Interacts (via SH2 domains) with the phosphorylated form of EPHA2. Interacts with ROS1; constitutive interaction that mediates VAV3 phosphorylation. Post-translationally, phosphorylated. Phosphorylation can be mediated by ROS1. In osteoclasts, undergoes tyrosine phosphorylation in response to CSF1. In terms of tissue distribution, isoform 1 and isoform 3 are widely expressed; both are expressed at very low levels in skeletal muscle. In keratinocytes, isoform 1 is less abundant than isoform 3. Isoform 3 is detected at very low levels, if any, in adrenal gland, bone marrow, spleen, fetal brain and spinal cord; in these tissues, isoform 1 is readily detectable.

Its function is as follows. Exchange factor for GTP-binding proteins RhoA, RhoG and, to a lesser extent, Rac1. Binds physically to the nucleotide-free states of those GTPases. Plays an important role in angiogenesis. Its recruitment by phosphorylated EPHA2 is critical for EFNA1-induced RAC1 GTPase activation and vascular endothelial cell migration and assembly. May be important for integrin-mediated signaling, at least in some cell types. In osteoclasts, along with SYK tyrosine kinase, required for signaling through integrin alpha-v/beta-1 (ITAGV-ITGB1), a crucial event for osteoclast proper cytoskeleton organization and function. This signaling pathway involves RAC1, but not RHO, activation. Necessary for proper wound healing. In the course of wound healing, required for the phagocytotic cup formation preceding macrophage phagocytosis of apoptotic neutrophils. Responsible for integrin beta-2 (ITGB2)-mediated macrophage adhesion and, to a lesser extent, contributes to beta-3 (ITGB3)-mediated adhesion. Does not affect integrin beta-1 (ITGB1)-mediated adhesion. The sequence is that of Guanine nucleotide exchange factor VAV3 (VAV3) from Homo sapiens (Human).